A 276-amino-acid chain; its full sequence is Rhomboid protease GlpG (276 aa).

Helical transmembrane passes span 94 to 114 (GPVT…MSLI), 142 to 162 (IFMH…WYLG), 169 to 189 (LGSG…GYVQ), 192 to 212 (FSGP…GYVW), 229 to 249 (LIIF…GMSM), and 250 to 270 (ANGA…VDTL). S201 functions as the Nucleophile in the catalytic mechanism. Residue H254 is part of the active site.

It belongs to the peptidase S54 family.

It localises to the cell inner membrane. It catalyses the reaction Cleaves type-1 transmembrane domains using a catalytic dyad composed of serine and histidine that are contributed by different transmembrane domains.. Rhomboid-type serine protease that catalyzes intramembrane proteolysis. The polypeptide is Rhomboid protease GlpG (Salmonella typhi).